A 498-amino-acid chain; its full sequence is tRNA-2-methylthio-N(6)-dimethylallyladenosine synthase (498 aa).

The MTTase N-terminal domain occupies 2–118; sequence PRYSITTFGC…LPGLLGDLAI (117 aa). 6 residues coordinate [4Fe-4S] cluster: Cys11, Cys47, Cys81, Cys163, Cys167, and Cys170. The Radical SAM core domain maps to 149–393; sequence PRAAPTAFVT…FEESEALLAA (245 aa). A TRAM domain is found at 396–467; that stretch reads SALVGTTQEV…KHSLQAELTE (72 aa). Residues 469–498 form a disordered region; the sequence is ARAAARPRQRGGLEPRPARRSLPVVAAEGG.

The protein belongs to the methylthiotransferase family. MiaB subfamily. In terms of assembly, monomer. [4Fe-4S] cluster serves as cofactor.

The protein localises to the cytoplasm. The catalysed reaction is N(6)-dimethylallyladenosine(37) in tRNA + (sulfur carrier)-SH + AH2 + 2 S-adenosyl-L-methionine = 2-methylsulfanyl-N(6)-dimethylallyladenosine(37) in tRNA + (sulfur carrier)-H + 5'-deoxyadenosine + L-methionine + A + S-adenosyl-L-homocysteine + 2 H(+). Functionally, catalyzes the methylthiolation of N6-(dimethylallyl)adenosine (i(6)A), leading to the formation of 2-methylthio-N6-(dimethylallyl)adenosine (ms(2)i(6)A) at position 37 in tRNAs that read codons beginning with uridine. The sequence is that of tRNA-2-methylthio-N(6)-dimethylallyladenosine synthase from Sorangium cellulosum (strain So ce56) (Polyangium cellulosum (strain So ce56)).